Consider the following 491-residue polypeptide: Chromosomal replication initiator protein DnaA (491 aa).

The tract at residues 1–69 (MTTWNKCLKK…TIQEFHDGDL (69 aa)) is domain I, interacts with DnaA modulators. The segment at 69-154 (LLIEYSNKKF…KDDQEYSFGL (86 aa)) is domain II. Positions 106–126 (DSEETSLNQEPKKSQKKLSSK) are disordered. A domain III, AAA+ region region spans residues 155–371 (PLKEKYVFDS…GALNRVLTTS (217 aa)). ATP contacts are provided by glycine 199, glycine 201, lysine 202, and threonine 203. A domain IV, binds dsDNA region spans residues 372 to 491 (KFNHKDPTIE…YELLLDKISR (120 aa)).

It belongs to the DnaA family. As to quaternary structure, oligomerizes as a right-handed, spiral filament on DNA at oriC.

The protein resides in the cytoplasm. In terms of biological role, plays an essential role in the initiation and regulation of chromosomal replication. ATP-DnaA binds to the origin of replication (oriC) to initiate formation of the DNA replication initiation complex once per cell cycle. Binds the DnaA box (a 9 base pair repeat at the origin) and separates the double-stranded (ds)DNA. Forms a right-handed helical filament on oriC DNA; dsDNA binds to the exterior of the filament while single-stranded (ss)DNA is stabiized in the filament's interior. The ATP-DnaA-oriC complex binds and stabilizes one strand of the AT-rich DNA unwinding element (DUE), permitting loading of DNA polymerase. After initiation quickly degrades to an ADP-DnaA complex that is not apt for DNA replication. Binds acidic phospholipids. The chain is Chromosomal replication initiator protein DnaA from Francisella philomiragia subsp. philomiragia (strain ATCC 25017 / CCUG 19701 / FSC 153 / O#319-036).